A 419-amino-acid chain; its full sequence is Light-independent protochlorophyllide reductase subunit N (419 aa).

The [4Fe-4S] cluster site is built by Cys-17, Cys-42, and Cys-103.

This sequence belongs to the BchN/ChlN family. As to quaternary structure, protochlorophyllide reductase is composed of three subunits; ChlL, ChlN and ChlB. Forms a heterotetramer of two ChlB and two ChlN subunits. [4Fe-4S] cluster is required as a cofactor.

The enzyme catalyses chlorophyllide a + oxidized 2[4Fe-4S]-[ferredoxin] + 2 ADP + 2 phosphate = protochlorophyllide a + reduced 2[4Fe-4S]-[ferredoxin] + 2 ATP + 2 H2O. It functions in the pathway porphyrin-containing compound metabolism; chlorophyll biosynthesis (light-independent). Component of the dark-operative protochlorophyllide reductase (DPOR) that uses Mg-ATP and reduced ferredoxin to reduce ring D of protochlorophyllide (Pchlide) to form chlorophyllide a (Chlide). This reaction is light-independent. The NB-protein (ChlN-ChlB) is the catalytic component of the complex. This chain is Light-independent protochlorophyllide reductase subunit N, found in Prochlorococcus marinus (strain NATL1A).